Consider the following 81-residue polypeptide: Albumin-1 (81 aa).

Positions 27-34 (LSSVAKMI) are excised as a propeptide.

Post-translationally, three disulfide bonds are probably present. In terms of processing, the C-terminal glycine may be removed from A1b.

A1b binds to basic 7S globulin (BG) and stimulates its phosphorylation activity. This chain is Albumin-1 (LEG1), found in Lupinus angustifolius (Narrow-leaved blue lupine).